Consider the following 348-residue polypeptide: WW domain binding protein 1-like (348 aa).

A helical transmembrane segment spans residues 42-62; the sequence is LWWFWLVWTVVIILSCCCVCH. 2 disordered regions span residues 111–253 and 306–348; these read VVNR…RRFT and CLSS…GSPS. Positions 134-155 are enriched in pro residues; sequence LPPPPQGGPPGGSPPGADPPPQ. Residues 156-177 are compositionally biased toward low complexity; it reads GSQGAQSSPLSGPSRSSTRPPS. S177 carries the post-translational modification Phosphoserine. Residues 220 to 234 are compositionally biased toward basic and acidic residues; the sequence is SECKEELLKDSRSER. Over residues 331–348 the composition is skewed to polar residues; it reads NTINEQDSPNSQHSGSPS.

The protein localises to the membrane. This is WW domain binding protein 1-like (Wbp1l) from Mus musculus (Mouse).